Consider the following 544-residue polypeptide: Chaperonin GroEL 2 (544 aa).

Residues 30–33, Lys-51, 87–91, Gly-415, and Asp-496 contribute to the ATP site; these read TLGP and DGTTT.

Belongs to the chaperonin (HSP60) family. Forms a cylinder of 14 subunits composed of two heptameric rings stacked back-to-back. Interacts with the co-chaperonin GroES.

It is found in the cytoplasm. The catalysed reaction is ATP + H2O + a folded polypeptide = ADP + phosphate + an unfolded polypeptide.. In terms of biological role, together with its co-chaperonin GroES, plays an essential role in assisting protein folding. The GroEL-GroES system forms a nano-cage that allows encapsulation of the non-native substrate proteins and provides a physical environment optimized to promote and accelerate protein folding. This is Chaperonin GroEL 2 from Rhizobium johnstonii (strain DSM 114642 / LMG 32736 / 3841) (Rhizobium leguminosarum bv. viciae).